Reading from the N-terminus, the 568-residue chain is COMPASS component cclA (568 aa).

The tract at residues 1-113 (MASDSGTPPP…MRYKLAPPKP (113 aa)) is disordered. Composition is skewed to basic and acidic residues over residues 68–77 (KESLKKRESK) and 89–98 (PDPKHREPKQ). A B30.2/SPRY domain is found at 160 to 353 (ADPGFPSSLY…IPIRFKQHIY (194 aa)).

This sequence belongs to the cclA family. In terms of assembly, component of the COMPASS complex.

It is found in the nucleus. Its subcellular location is the chromosome. The protein resides in the telomere. Component of the COMPASS (Set1C) complex that specifically mono-, di- and trimethylates histone H3 to form H3K4me1/2/3, which subsequently plays a role in telomere length maintenance and transcription elongation regulation. Controls the production of several secondary metabolites, including colletochlorins, higginsianins and sclerosporide. Plays a key role in mycelial growth, sporulation, spore germination and virulence. The polypeptide is COMPASS component cclA (Colletotrichum higginsianum (strain IMI 349063) (Crucifer anthracnose fungus)).